Reading from the N-terminus, the 695-residue chain is G-patch and R3H domain-containing protein C30B4.02c (695 aa).

Disordered stretches follow at residues 168 to 200, 213 to 242, 257 to 317, 332 to 351, 388 to 448, and 475 to 517; these read SDKE…NDDS, DIAN…EFDI, FADL…FDEG, GNTD…DEDE, DSED…VAAR, and DKSK…DSDN. Basic and acidic residues predominate over residues 182–198; that stretch reads CYKEQESEKELYSKDND. 3 stretches are compositionally biased toward acidic residues: residues 262–286, 307–317, and 337–351; these read VLEE…EEEE, EDSESLEFDEG, and LAED…DEDE. The segment covering 421-434 has biased composition (basic residues); sequence KKDRKLPKKMRKAQ. Residues 525-587 enclose the R3H domain; sequence KIFINDVYQR…KRYTMLSKTH (63 aa). The G-patch domain occupies 652–695; it reads KENPGRRLLEKLGWYAGKGLGHPENEGSKDSLRAIVKVSRSGLG.

It localises to the cytoplasm. In Schizosaccharomyces pombe (strain 972 / ATCC 24843) (Fission yeast), this protein is G-patch and R3H domain-containing protein C30B4.02c.